An 87-amino-acid chain; its full sequence is MDKQEKSLIINEFKKSENDTGSTEVQVALLTARIHQLTTHMIANKHDFHTKRSLLTLVGRRRRLLSYMRNNNGAGYQELIANLGLRK.

The protein belongs to the universal ribosomal protein uS15 family. As to quaternary structure, part of the 30S ribosomal subunit. Forms a bridge to the 50S subunit in the 70S ribosome, contacting the 23S rRNA.

In terms of biological role, one of the primary rRNA binding proteins, it binds directly to 16S rRNA where it helps nucleate assembly of the platform of the 30S subunit by binding and bridging several RNA helices of the 16S rRNA. Forms an intersubunit bridge (bridge B4) with the 23S rRNA of the 50S subunit in the ribosome. This chain is Small ribosomal subunit protein uS15, found in Dehalococcoides mccartyi (strain ATCC BAA-2266 / KCTC 15142 / 195) (Dehalococcoides ethenogenes (strain 195)).